A 355-amino-acid polypeptide reads, in one-letter code: F-box protein At1g31080 (355 aa).

Positions 4 to 49 (GANSASIPNDLILEILSRLPAKSTGRFRCVSKLWGSMLCHSYFTEL) constitute an F-box domain. The span at 306–320 (AGTSRSPPKQSTSTS) shows a compositional bias: polar residues. The disordered stretch occupies residues 306-333 (AGTSRSPPKQSTSTSSREDHEVRTLAHQ). Positions 321 to 333 (SREDHEVRTLAHQ) are enriched in basic and acidic residues.

In Arabidopsis thaliana (Mouse-ear cress), this protein is F-box protein At1g31080.